A 267-amino-acid chain; its full sequence is Phosphonoacetaldehyde hydrolase (267 aa).

The Nucleophile role is filled by D10. Mg(2+)-binding residues include D10 and A12. K51 (schiff-base intermediate with substrate) is an active-site residue. A Mg(2+)-binding site is contributed by D184.

It belongs to the HAD-like hydrolase superfamily. PhnX family. Homodimer. It depends on Mg(2+) as a cofactor.

The catalysed reaction is phosphonoacetaldehyde + H2O = acetaldehyde + phosphate + H(+). Functionally, involved in phosphonate degradation. This Paraburkholderia phytofirmans (strain DSM 17436 / LMG 22146 / PsJN) (Burkholderia phytofirmans) protein is Phosphonoacetaldehyde hydrolase.